Here is a 329-residue protein sequence, read N- to C-terminus: Indolepyruvate C-methyltransferase (329 aa).

It belongs to the methyltransferase superfamily.

It catalyses the reaction indole-3-pyruvate + S-adenosyl-L-methionine = (R)-3-(indol-3-yl)-2-oxobutanoate + S-adenosyl-L-homocysteine + H(+). With respect to regulation, strongly inhibited by the thiol reagents p-chloromercuribenzoate and N-ethylmaleimide. Partially inhibited by o-phenanthroline and 2,2'-dipyridyl. Competitively inhibited by L-tryptophan and indolmycin. Its function is as follows. Involved in the biosynthesis of the antibiotic indolmycin, an inhibitor of the bacterial tryptophan-tRNA synthetases. Catalyzes the transfer of a methyl group from S-adenosyl-L-methionine to position 3 of the aliphatic side chain of (indol-3-yl)pyruvate to yield 3-methylindolepyruvate. In Streptomyces griseus, this protein is Indolepyruvate C-methyltransferase.